A 276-amino-acid polypeptide reads, in one-letter code: Large ribosomal subunit protein uL2 (276 aa).

Residues 224–276 are disordered; that stretch reads VAMNPVDHPHGGGEGKTGEGRVPVSPWGTPTKGYRTRRNKRTTSMIVQRRQKR. A compositionally biased stretch (basic and acidic residues) spans 230-242; sequence DHPHGGGEGKTGE.

Belongs to the universal ribosomal protein uL2 family. Part of the 50S ribosomal subunit. Forms a bridge to the 30S subunit in the 70S ribosome.

In terms of biological role, one of the primary rRNA binding proteins. Required for association of the 30S and 50S subunits to form the 70S ribosome, for tRNA binding and peptide bond formation. It has been suggested to have peptidyltransferase activity; this is somewhat controversial. Makes several contacts with the 16S rRNA in the 70S ribosome. In Polynucleobacter asymbioticus (strain DSM 18221 / CIP 109841 / QLW-P1DMWA-1) (Polynucleobacter necessarius subsp. asymbioticus), this protein is Large ribosomal subunit protein uL2.